Here is a 417-residue protein sequence, read N- to C-terminus: Putative transporter AmpG 1 (417 aa).

Helical transmembrane passes span 7-27, 42-62, 78-98, 104-124, 143-163, 171-191, 225-245, 273-293, 301-321, 328-348, 366-386, and 389-409; these read LCIIWLFGLISGFNLMITGNT, IGILSFITLPYSINFLLAPIF, LSWICLTSSALIFLIYIFSFL, LLLFAFTALIISFFSAAQDTI, GIYIFGYRVGMLLAGSGAIYL, EIYKIFAGLVFIYLILLIVGI, ALKPIGSVYFIILILIFLVLY, VGKFCGVVGAIIGGLVGGVIM, SIFLFGIIHALGHILFIFLEI, LLFITIGIASITGGMTMTAYI, FLSSMMGISRSIFPIISGYMV, and FGWQNFFLFTTIITIPSLLIL.

This sequence belongs to the major facilitator superfamily.

It is found in the cell inner membrane. In Rickettsia conorii (strain ATCC VR-613 / Malish 7), this protein is Putative transporter AmpG 1 (ampG1).